The primary structure comprises 426 residues: C4-dicarboxylate transport protein (426 aa).

The next 8 helical transmembrane spans lie at 8 to 28 (VLYVQVIVAIIIGIALGHFYP), 44 to 64 (LIKMVIGPIIFCTVVTGIAGM), 78 to 98 (LLYFEIVSTFALILGLAATHL), 148 to 168 (GEILQILLIALLFGAVLAHVG), 184 to 204 (ILFGMVGIITKLAPIGAFGAM), 222 to 242 (LIGTFYLTSIVFVVVVLGFIA), 297 to 317 (GYSFNLDGTNIYMTMAVLFIA), and 355 to 375 (AATLAVVPTIPLSGMVLILGI).

It belongs to the dicarboxylate/amino acid:cation symporter (DAACS) (TC 2.A.23) family.

It is found in the cell inner membrane. In terms of biological role, responsible for the transport of dicarboxylates such as succinate, fumarate, and malate from the periplasm across the membrane. The sequence is that of C4-dicarboxylate transport protein from Paraburkholderia phymatum (strain DSM 17167 / CIP 108236 / LMG 21445 / STM815) (Burkholderia phymatum).